A 556-amino-acid polypeptide reads, in one-letter code: Urease subunit alpha 1 (556 aa).

The Urease domain occupies Gly-127 to Leu-556. Ni(2+)-binding residues include His-132, His-134, and Lys-212. Lys-212 is modified (N6-carboxylysine). Residue His-214 coordinates substrate. His-241 and His-267 together coordinate Ni(2+). His-315 acts as the Proton donor in catalysis. Residue Asp-355 coordinates Ni(2+).

It belongs to the metallo-dependent hydrolases superfamily. Urease alpha subunit family. In terms of assembly, may form a heterohexamer of 3 UreC (alpha) and 3 UreAB (gamma/beta) subunits. May also form a heterotrimer of UreA (gamma), UreB (beta) and UreC (alpha) subunits. Three heterotrimers associate to form the active enzyme. Requires Ni cation as cofactor. Post-translationally, carboxylation allows a single lysine to coordinate two nickel ions.

Its subcellular location is the cytoplasm. It carries out the reaction urea + 2 H2O + H(+) = hydrogencarbonate + 2 NH4(+). It functions in the pathway nitrogen metabolism; urea degradation; CO(2) and NH(3) from urea (urease route): step 1/1. This is Urease subunit alpha 1 from Streptomyces avermitilis (strain ATCC 31267 / DSM 46492 / JCM 5070 / NBRC 14893 / NCIMB 12804 / NRRL 8165 / MA-4680).